Here is a 710-residue protein sequence, read N- to C-terminus: Subtilisin-like protease SBT4.8 (710 aa).

A signal peptide spans Met-1–Ala-23. Residues Ile-24 to Gln-111 constitute a propeptide, activation peptide. The Inhibitor I9 domain maps to Val-33–Leu-110. Residues Ser-115 to Ile-559 enclose the Peptidase S8 domain. The active-site Charge relay system is Asp-143. Asn-174 carries N-linked (GlcNAc...) asparagine glycosylation. His-198 functions as the Charge relay system in the catalytic mechanism. Residues Asn-221, Asn-364, and Asn-419 are each glycosylated (N-linked (GlcNAc...) asparagine). Residues Lys-354–Leu-414 form the PA domain. The active-site Charge relay system is the Ser-498. Residues Asn-535, Asn-568, Asn-580, Asn-618, and Asn-636 are each glycosylated (N-linked (GlcNAc...) asparagine).

Belongs to the peptidase S8 family. Post-translationally, the C-terminal propeptide is autocleaved.

The protein localises to the secreted. This Arabidopsis thaliana (Mouse-ear cress) protein is Subtilisin-like protease SBT4.8.